The primary structure comprises 442 residues: Cytokine receptor-like factor 3 (442 aa).

The stretch at E10 to E46 forms a coiled coil. The Fibronectin type-III domain occupies P181–P274.

The protein belongs to the cytokine receptor-like factor 3 family.

It localises to the cytoplasm. In terms of biological role, may play a role in the negative regulation of cell cycle progression. This is Cytokine receptor-like factor 3 (Crlf3) from Mus musculus (Mouse).